Reading from the N-terminus, the 212-residue chain is Phosphatidylserine decarboxylase proenzyme (212 aa).

Ser182 acts as the Schiff-base intermediate with substrate; via pyruvic acid in catalysis. Ser182 is modified (pyruvic acid (Ser); by autocatalysis).

The protein belongs to the phosphatidylserine decarboxylase family. PSD-A subfamily. Heterodimer of a large membrane-associated beta subunit and a small pyruvoyl-containing alpha subunit. Pyruvate is required as a cofactor. In terms of processing, is synthesized initially as an inactive proenzyme. Formation of the active enzyme involves a self-maturation process in which the active site pyruvoyl group is generated from an internal serine residue via an autocatalytic post-translational modification. Two non-identical subunits are generated from the proenzyme in this reaction, and the pyruvate is formed at the N-terminus of the alpha chain, which is derived from the carboxyl end of the proenzyme. The post-translation cleavage follows an unusual pathway, termed non-hydrolytic serinolysis, in which the side chain hydroxyl group of the serine supplies its oxygen atom to form the C-terminus of the beta chain, while the remainder of the serine residue undergoes an oxidative deamination to produce ammonia and the pyruvoyl prosthetic group on the alpha chain.

The protein resides in the cell membrane. It catalyses the reaction a 1,2-diacyl-sn-glycero-3-phospho-L-serine + H(+) = a 1,2-diacyl-sn-glycero-3-phosphoethanolamine + CO2. It participates in phospholipid metabolism; phosphatidylethanolamine biosynthesis; phosphatidylethanolamine from CDP-diacylglycerol: step 2/2. Functionally, catalyzes the formation of phosphatidylethanolamine (PtdEtn) from phosphatidylserine (PtdSer). The polypeptide is Phosphatidylserine decarboxylase proenzyme (Chlorobium chlorochromatii (strain CaD3)).